We begin with the raw amino-acid sequence, 432 residues long: Gamma-glutamyl phosphate reductase (432 aa).

Belongs to the gamma-glutamyl phosphate reductase family.

Its subcellular location is the cytoplasm. The catalysed reaction is L-glutamate 5-semialdehyde + phosphate + NADP(+) = L-glutamyl 5-phosphate + NADPH + H(+). The protein operates within amino-acid biosynthesis; L-proline biosynthesis; L-glutamate 5-semialdehyde from L-glutamate: step 2/2. In terms of biological role, catalyzes the NADPH-dependent reduction of L-glutamate 5-phosphate into L-glutamate 5-semialdehyde and phosphate. The product spontaneously undergoes cyclization to form 1-pyrroline-5-carboxylate. In Ruminiclostridium cellulolyticum (strain ATCC 35319 / DSM 5812 / JCM 6584 / H10) (Clostridium cellulolyticum), this protein is Gamma-glutamyl phosphate reductase.